The primary structure comprises 283 residues: Thymidylate synthase (283 aa).

Arg22 contributes to the dUMP binding site. The active-site Nucleophile is the Cys160. Residues 180–183 (RSCD), Asn191, and 221–223 (HIY) contribute to the dUMP site. Residue Asp183 participates in (6R)-5,10-methylene-5,6,7,8-tetrahydrofolate binding. (6R)-5,10-methylene-5,6,7,8-tetrahydrofolate is bound at residue Ser282.

Belongs to the thymidylate synthase family. Bacterial-type ThyA subfamily. Homodimer.

It is found in the cytoplasm. The enzyme catalyses dUMP + (6R)-5,10-methylene-5,6,7,8-tetrahydrofolate = 7,8-dihydrofolate + dTMP. It participates in pyrimidine metabolism; dTTP biosynthesis. Its function is as follows. Catalyzes the reductive methylation of 2'-deoxyuridine-5'-monophosphate (dUMP) to 2'-deoxythymidine-5'-monophosphate (dTMP) while utilizing 5,10-methylenetetrahydrofolate (mTHF) as the methyl donor and reductant in the reaction, yielding dihydrofolate (DHF) as a by-product. This enzymatic reaction provides an intracellular de novo source of dTMP, an essential precursor for DNA biosynthesis. This Vibrio parahaemolyticus serotype O3:K6 (strain RIMD 2210633) protein is Thymidylate synthase.